The primary structure comprises 172 residues: Cold-inducible RNA-binding protein (172 aa).

One can recognise an RRM domain in the interval G6–K84. The segment at G69–E172 is disordered. Composition is skewed to gly residues over residues Y93–G106 and F114–G125. Phosphoserine occurs at positions 130, 138, 146, 156, 159, and 163. Over residues S138–E172 the composition is skewed to low complexity.

In terms of assembly, interacts with EIF4G1. Associates with ribosomes. Post-translationally, methylated on arginine residues. Methylation of the RGG motifs is a prerequisite for recruitment into SGs. In terms of processing, phosphorylated by CK2, GSK3A and GSK3B. Phosphorylation by GSK3B increases RNA-binding activity to the TXN 3'-UTR transcript upon exposure to UV radiation.

It localises to the nucleus. The protein localises to the nucleoplasm. It is found in the cytoplasm. Cold-inducible mRNA binding protein that plays a protective role in the genotoxic stress response by stabilizing transcripts of genes involved in cell survival. Acts as a translational activator. Seems to play an essential role in cold-induced suppression of cell proliferation. Binds specifically to the 3'-untranslated regions (3'-UTRs) of stress-responsive transcripts RPA2 and TXN. Acts as a translational repressor. Promotes assembly of stress granules (SGs), when overexpressed. The polypeptide is Cold-inducible RNA-binding protein (CIRBP) (Pongo abelii (Sumatran orangutan)).